Here is a 237-residue protein sequence, read N- to C-terminus: Octopine transport system permease protein OccQ (237 aa).

One can recognise an ABC transmembrane type-1 domain in the interval 22–222 (TGMTVAVASS…LITFISGQAF (201 aa)). 4 helical membrane passes run 24–44 (MTVA…CLGA), 72–92 (LVIY…GSLF), 96–116 (GFVS…VSAA), and 201–221 (FSFY…SGQA).

This sequence belongs to the binding-protein-dependent transport system permease family. HisMQ subfamily.

The protein localises to the cell inner membrane. Its function is as follows. Component of the octopine active transport system probably consisting of four subunits: Q, M, P and T. The protein is Octopine transport system permease protein OccQ (occQ) of Rhizobium meliloti (Ensifer meliloti).